A 1225-amino-acid chain; its full sequence is MNNIPIKPKDAQWTDAQWKSIYANGQDVLVAAAAGSGKTAVLVERIIQKIIRDEIDVDKLLVVTFTNLSAREMKHRVDQRIQQASIEDPRNEHLKNQRIKIHQAQISTLHSFCLKIIQQHYDVIDLDPNFRTISDVENVLLLEQSIDEVLEKHYDTPDIEFLTLVEQLSSDRNDDNFRDLLKRFYNFSIANPSPFEWLDSLVEIYTDDNKHKLYLDELERLSKIYIKAAYHTLLEAENNFLNCIEAEKHLDVIKLEKFKCEKMIEGNVINFEEIINYTSEKLPTITKKLKDTNEDEGISSQFLTNAKDFFDDYKKLLSEVKNKYLMRSYEDLKVDMKRLAPRIQYLVQIVKDIINGFAEKKRSRNVLDFSDYEHFALQILTDQEGNASPIAKEYRSQFEEILVDEYQDTNQVQEAIISKIKRGDESNGNLFMVGDVKQSIYKFRQADPTLFMDKYHRFTKDGDQSGLRIDLSKNFRSRKEVLATTNYLFDHMMDEEVGEIEYDADARLYFGATKYSDKSMPLELHALIQDKSSDNDLEKSEQEARYIAEQVKYIIEHKQVYDMKSETYRQATFKDIVILERGLKNARNLQQVFKDYNIPFHVNSKEGYFEQTEVRLVLSFLRTVDNPLQDIYLVGLMRSVIYQFTEDELANIRVQSMNDDYFYQSILHYMKDQEANPLLVEKLEHFMDDINMYQEYSQSHPVYQLIDKFYNDHYVIQYFSGLIGGKGRRANLYGLFNKAVEFENSSFRGLYQFIRFIDELIERNKDFGEENVIGPNDNVVRMMTVHSSKGLEFPYVIYSELSKNFNKGDLRKPLILNQKYGLGIDYFDLEQNVTYPSLSSVVIKSITEKELISEEMRLMYVALTRAKEQLILIGTIDKEEALEKLERLPISGNQIALHKRLSADRPFDLIYSILAKYQSTSLLPEYRFEKSIDNLDESLRPTVDIKIAQFEELSIEDSESEQESRNISDLEVEGSHDDTLKQQINDQLSFKYPYLKDTEKPSKQSVSELKRQLETEESGTSYERVRQYRIGVSTYERPKFLRENKKRKANEIGTLMHTVMQHLPFKETRMTETELNDYINELIEKHIIEEDAKKDIQFEAVMNFIRSDLYMTITQADKVYRELPFVVNQARVDEMPESDEDVSIIQGMIDLIFLKDDQYYFVDYKTDAFNKRRGMTDEEVGIQLRDKYKIQMKYYKNTLETILNSKVYGYLYFFQFGQMSIEEDV.

The region spanning 11-478 (AQWTDAQWKS…IDLSKNFRSR (468 aa)) is the UvrD-like helicase ATP-binding domain. 32–39 (AAAGSGKT) contacts ATP. The region spanning 479–790 (KEVLATTNYL…RMMTVHSSKG (312 aa)) is the UvrD-like helicase C-terminal domain. A compositionally biased stretch (basic and acidic residues) spans 999–1014 (EKPSKQSVSELKRQLE). The segment at 999-1018 (EKPSKQSVSELKRQLETEES) is disordered.

The protein belongs to the helicase family. AddA subfamily. As to quaternary structure, heterodimer of AddA and AddB/RexB. The cofactor is Mg(2+).

It carries out the reaction Couples ATP hydrolysis with the unwinding of duplex DNA by translocating in the 3'-5' direction.. The enzyme catalyses ATP + H2O = ADP + phosphate + H(+). In terms of biological role, the heterodimer acts as both an ATP-dependent DNA helicase and an ATP-dependent, dual-direction single-stranded exonuclease. Recognizes the chi site generating a DNA molecule suitable for the initiation of homologous recombination. The AddA nuclease domain is required for chi fragment generation; this subunit has the helicase and 3' -&gt; 5' nuclease activities. In Staphylococcus haemolyticus (strain JCSC1435), this protein is ATP-dependent helicase/nuclease subunit A.